Consider the following 100-residue polypeptide: Small ribosomal subunit protein uS14c (100 aa).

This sequence belongs to the universal ribosomal protein uS14 family. Part of the 30S ribosomal subunit.

It localises to the plastid. The protein localises to the chloroplast. Binds 16S rRNA, required for the assembly of 30S particles. The chain is Small ribosomal subunit protein uS14c from Tetradesmus obliquus (Green alga).